The sequence spans 126 residues: Large ribosomal subunit protein bL17 (126 aa).

It belongs to the bacterial ribosomal protein bL17 family. As to quaternary structure, part of the 50S ribosomal subunit. Contacts protein L32.

This chain is Large ribosomal subunit protein bL17, found in Lysinibacillus sphaericus (strain C3-41).